We begin with the raw amino-acid sequence, 73 residues long: UPF0154 protein MYCGA5700 (73 aa).

A helical membrane pass occupies residues 5–25 (LALGLSIPLCLIVGAFVGYFV).

The protein belongs to the UPF0154 family.

It is found in the membrane. In Mycoplasmoides gallisepticum (strain R(low / passage 15 / clone 2)) (Mycoplasma gallisepticum), this protein is UPF0154 protein MYCGA5700.